The primary structure comprises 122 residues: Ribonuclease P protein component (122 aa).

Belongs to the RnpA family. As to quaternary structure, consists of a catalytic RNA component (M1 or rnpB) and a protein subunit.

It carries out the reaction Endonucleolytic cleavage of RNA, removing 5'-extranucleotides from tRNA precursor.. Functionally, RNaseP catalyzes the removal of the 5'-leader sequence from pre-tRNA to produce the mature 5'-terminus. It can also cleave other RNA substrates such as 4.5S RNA. The protein component plays an auxiliary but essential role in vivo by binding to the 5'-leader sequence and broadening the substrate specificity of the ribozyme. This is Ribonuclease P protein component from Roseiflexus castenholzii (strain DSM 13941 / HLO8).